Consider the following 307-residue polypeptide: GMP synthase [glutamine-hydrolyzing] subunit B (307 aa).

Positions 1-184 (MWENFIEEKV…LGLPEKIYNR (184 aa)) constitute a GMPS ATP-PPase domain. 27-33 (SGGVDSS) provides a ligand contact to ATP.

As to quaternary structure, heterodimer composed of a glutamine amidotransferase subunit (A) and a GMP-binding subunit (B).

The catalysed reaction is XMP + L-glutamine + ATP + H2O = GMP + L-glutamate + AMP + diphosphate + 2 H(+). Its pathway is purine metabolism; GMP biosynthesis; GMP from XMP (L-Gln route): step 1/1. Its function is as follows. Catalyzes the synthesis of GMP from XMP. The polypeptide is GMP synthase [glutamine-hydrolyzing] subunit B (Thermococcus kodakarensis (strain ATCC BAA-918 / JCM 12380 / KOD1) (Pyrococcus kodakaraensis (strain KOD1))).